Here is a 121-residue protein sequence, read N- to C-terminus: uncharacterized protein (121 aa).

This is an uncharacterized protein from Methanocaldococcus jannaschii (strain ATCC 43067 / DSM 2661 / JAL-1 / JCM 10045 / NBRC 100440) (Methanococcus jannaschii).